We begin with the raw amino-acid sequence, 314 residues long: MKQKIHLWIEEYLFFPKFFQKIISFLLLPLTLIYLIIIFTKRFKAKKIDFDIPIISIGNIIVGGSGKTPITIELASKYENACVILRGYGRSSKGLQIVSLNGDIKVDVTVSGDEAMLLAKSLKKATIIVSENRIEAILKAKELGSKIIFLDDGFSKYSISKFDILLKPKNEPTNNFCLPSGGYREPKSFYKKANIVLQEGKDFKRVITIKKDENIKELPSYTILLTAISKPKRLLEFLPKNIKMISFPDHHNFTKEEILDIQNEYKDYAILTTGKDMVKLKEFNLENLYLMDLSIKIDENVDFSSMNSYINSFK.

61–68 lines the ATP pocket; the sequence is IVGGSGKT.

It belongs to the LpxK family.

The catalysed reaction is a lipid A disaccharide + ATP = a lipid IVA + ADP + H(+). The protein operates within glycolipid biosynthesis; lipid IV(A) biosynthesis; lipid IV(A) from (3R)-3-hydroxytetradecanoyl-[acyl-carrier-protein] and UDP-N-acetyl-alpha-D-glucosamine: step 6/6. In terms of biological role, transfers the gamma-phosphate of ATP to the 4'-position of a tetraacyldisaccharide 1-phosphate intermediate (termed DS-1-P) to form tetraacyldisaccharide 1,4'-bis-phosphate (lipid IVA). This Aliarcobacter butzleri (strain RM4018) (Arcobacter butzleri) protein is Tetraacyldisaccharide 4'-kinase.